We begin with the raw amino-acid sequence, 977 residues long: uncharacterized protein (977 aa).

Residues 1-24 (MQSNLLKVLGVLAIVATLVCFIFA) form the signal peptide. A disordered region spans residues 125-146 (TESTRPGKSNLDDKGNMIPIPR). 6 helical membrane passes run 612–632 (IKAI…LGFA), 722–742 (LGLS…IVII), 754–774 (AFMA…FLLF), 796–816 (VVMM…LDFV), 833–853 (FIGT…INWF), and 866–886 (GVNM…YGYV). Residues 918 to 977 (KALSPIGMDDKTRQGITGRAEARLKQRNKTLDQAEKNRKNTPKEGGEKTNAEPPQPEARG) are disordered. A compositionally biased stretch (basic and acidic residues) spans 937-967 (AEARLKQRNKTLDQAEKNRKNTPKEGGEKTN).

This sequence belongs to the TrbL/VirB6 family.

It localises to the cell membrane. This is an uncharacterized protein from Rickettsia felis (strain ATCC VR-1525 / URRWXCal2) (Rickettsia azadi).